A 498-amino-acid chain; its full sequence is Probable malate:quinone oxidoreductase 2 (498 aa).

The protein belongs to the MQO family. FAD serves as cofactor.

It catalyses the reaction (S)-malate + a quinone = a quinol + oxaloacetate. It functions in the pathway carbohydrate metabolism; tricarboxylic acid cycle; oxaloacetate from (S)-malate (quinone route): step 1/1. This chain is Probable malate:quinone oxidoreductase 2, found in Staphylococcus aureus (strain COL).